We begin with the raw amino-acid sequence, 93 residues long: Putative pterin-4-alpha-carbinolamine dehydratase (93 aa).

Belongs to the pterin-4-alpha-carbinolamine dehydratase family.

It carries out the reaction (4aS,6R)-4a-hydroxy-L-erythro-5,6,7,8-tetrahydrobiopterin = (6R)-L-erythro-6,7-dihydrobiopterin + H2O. The protein is Putative pterin-4-alpha-carbinolamine dehydratase of Nostoc punctiforme (strain ATCC 29133 / PCC 73102).